We begin with the raw amino-acid sequence, 462 residues long: Argininosuccinate lyase (462 aa).

It belongs to the lyase 1 family. Argininosuccinate lyase subfamily.

It localises to the cytoplasm. It carries out the reaction 2-(N(omega)-L-arginino)succinate = fumarate + L-arginine. It functions in the pathway amino-acid biosynthesis; L-arginine biosynthesis; L-arginine from L-ornithine and carbamoyl phosphate: step 3/3. The polypeptide is Argininosuccinate lyase (Bacillus cereus (strain B4264)).